The primary structure comprises 309 residues: Protein EXORDIUM-like 1 (309 aa).

The signal sequence occupies residues 1 to 23 (MASFVMGYFLLFAVAFMCLDART).

It belongs to the EXORDIUM family.

Its subcellular location is the secreted. The protein resides in the extracellular space. It localises to the apoplast. May play a role in a brassinosteroid-dependent regulatory pathway that controls growth and development under low carbon and energy availability. The sequence is that of Protein EXORDIUM-like 1 (EXL1) from Arabidopsis thaliana (Mouse-ear cress).